The sequence spans 294 residues: Nucleotide-binding protein Cbei_4857 (294 aa).

8-15 (GLSGAGKT) is an ATP binding site. 59–62 (DIRG) contributes to the GTP binding site.

It belongs to the RapZ-like family.

Displays ATPase and GTPase activities. The protein is Nucleotide-binding protein Cbei_4857 of Clostridium beijerinckii (strain ATCC 51743 / NCIMB 8052) (Clostridium acetobutylicum).